Consider the following 212-residue polypeptide: Interleukin-6 (212 aa).

Positions 1 to 27 are cleaved as a signal peptide; sequence MNSFSTSAFGPVAFSLGLLLVLPAAFP. Cysteines 72 and 78 form a disulfide. Asn73 carries N-linked (GlcNAc...) asparagine glycosylation. Position 81 is a phosphoserine (Ser81). Cysteines 101 and 111 form a disulfide. Asn172 carries N-linked (GlcNAc...) asparagine glycosylation.

It belongs to the IL-6 superfamily. Component of a hexamer of two molecules each of IL6, IL6R and IL6ST; first binds to IL6R to associate with the signaling subunit IL6ST. Interacts with IL6R (via the N-terminal ectodomain); this interaction may be affected by IL6R-binding with SORL1, hence decreasing IL6 cis signaling. Interacts with SORL1 (via the N-terminal ectodomain); this interaction leads to IL6 internalization and lysosomal degradation. May form a trimeric complex with the soluble SORL1 ectodomain and soluble IL6R receptor; this interaction might stabilize circulating IL6, hence promoting IL6 trans signaling.

The protein resides in the secreted. Cytokine with a wide variety of biological functions in immunity, tissue regeneration, and metabolism. Binds to IL6R, then the complex associates to the signaling subunit IL6ST/gp130 to trigger the intracellular IL6-signaling pathway. The interaction with the membrane-bound IL6R and IL6ST stimulates 'classic signaling', whereas the binding of IL6 and soluble IL6R to IL6ST stimulates 'trans-signaling'. Alternatively, 'cluster signaling' occurs when membrane-bound IL6:IL6R complexes on transmitter cells activate IL6ST receptors on neighboring receiver cells. Its function is as follows. IL6 is a potent inducer of the acute phase response. Rapid production of IL6 contributes to host defense during infection and tissue injury, but excessive IL6 synthesis is involved in disease pathology. In the innate immune response, is synthesized by myeloid cells, such as macrophages and dendritic cells, upon recognition of pathogens through toll-like receptors (TLRs) at the site of infection or tissue injury. In the adaptive immune response, is required for the differentiation of B cells into immunoglobulin-secreting cells. Plays a major role in the differentiation of CD4(+) T cell subsets. Essential factor for the development of T follicular helper (Tfh) cells that are required for the induction of germinal-center formation. Required to drive naive CD4(+) T cells to the Th17 lineage. Also required for proliferation of myeloma cells and the survival of plasmablast cells. In terms of biological role, acts as an essential factor in bone homeostasis and on vessels directly or indirectly by induction of VEGF, resulting in increased angiogenesis activity and vascular permeability. Induces, through 'trans-signaling' and synergistically with IL1B and TNF, the production of VEGF. Involved in metabolic controls, is discharged into the bloodstream after muscle contraction increasing lipolysis and improving insulin resistance. 'Trans-signaling' in central nervous system also regulates energy and glucose homeostasis. Mediates, through GLP-1, crosstalk between insulin-sensitive tissues, intestinal L cells and pancreatic islets to adapt to changes in insulin demand. Also acts as a myokine. Plays a protective role during liver injury, being required for maintenance of tissue regeneration. Also has a pivotal role in iron metabolism by regulating HAMP/hepcidin expression upon inflammation or bacterial infection. Through activation of IL6ST-YAP-NOTCH pathway, induces inflammation-induced epithelial regeneration. The sequence is that of Interleukin-6 (IL6) from Macaca mulatta (Rhesus macaque).